Consider the following 539-residue polypeptide: MLCRLLLCECLLLITGYAHDDDWIDPTDMLNYDAASGTMRKSQVRSGTSEKKEVSPDSSEAEELSDCLHRLDSLTHKVDSCEKKKMKDYESQSNPVFRRYLNKILIEAGKLGLPDENKVEMRYDAEILLSRQTLLEIQKFLSGEEWKPGALDDALSDILINFKCHDSEAWKWQFEDYFGVDPYNVFMVLLCLLCLVVLVATELWTYVRWYTQMKRIFIISFLLSLAWNWIYLYKMAFAQHQANIAGMEPFDNLCAKKMDWTGSLWEWFTSSWTYKDDPCQKYYELLIVNPIWLVPPTKALAITFTNFVTEPLKHIGKGAGEFIKALMKEIPVLLQIPVLAILALAVLSFCYGAGRSVPMLRHFGGPDREPPRALEPDDRRRQKGLDYRLHGGAGDADFSYRGPAGSIEQGPYDKMHASKRDALRQRFHSGNKSPEVLRAFDLPDTEAQEHPEVVPSHKSPIMNTNLETGELPGESTPTEYSQSAKDVSGQVPSAGKSSPTVDKAQLKTDSECSPPGGCPPSKEAAVAAHGTEPVSSPCG.

An N-terminal signal peptide occupies residues 1-18 (MLCRLLLCECLLLITGYA). Residues 19-184 (HDDDWIDPTD…EDYFGVDPYN (166 aa)) are Lumenal-facing. Positions 41–61 (KSQVRSGTSEKKEVSPDSSEA) are disordered. Residues 185 to 205 (VFMVLLCLLCLVVLVATELWT) form a helical membrane-spanning segment. The Cytoplasmic segment spans residues 206–215 (YVRWYTQMKR). The helical transmembrane segment at 216–236 (IFIISFLLSLAWNWIYLYKMA) threads the bilayer. At 237-329 (FAQHQANIAG…GEFIKALMKE (93 aa)) the chain is on the lumenal side. Residues 330–350 (IPVLLQIPVLAILALAVLSFC) form a helical membrane-spanning segment. At 351 to 539 (YGAGRSVPML…GTEPVSSPCG (189 aa)) the chain is on the cytoplasmic side. The segment at 361–410 (RHFGGPDREPPRALEPDDRRRQKGLDYRLHGGAGDADFSYRGPAGSIEQG) is disordered. Positions 364-389 (GGPDREPPRALEPDDRRRQKGLDYRL) are enriched in basic and acidic residues. Phosphoserine is present on residues S429, S433, and S459. The tract at residues 444–539 (DTEAQEHPEV…GTEPVSSPCG (96 aa)) is disordered. Residues 475-485 (STPTEYSQSAK) show a composition bias toward polar residues. T476 is subject to Phosphothreonine. S498, S513, and S521 each carry phosphoserine. The span at 512-521 (CSPPGGCPPS) shows a compositional bias: low complexity.

Belongs to the chloride channel MCLC family. In terms of assembly, homomultimers. Interacts with mitochondrial protein PIGBOS1 (via C-terminus); the interaction occurs at the mitochondria-associated endoplasmic reticulum (ER) membrane, a zone of contact between the ER and mitochondrial membranes, but does not appear to play a role in ER-mitochondria tethering and is not affected by ER stress. Interacts with CALR. In terms of tissue distribution, expressed in cerebellum (at protein level).

The protein resides in the endoplasmic reticulum membrane. The enzyme catalyses chloride(in) = chloride(out). It carries out the reaction bromide(in) = bromide(out). The catalysed reaction is nitrate(in) = nitrate(out). It catalyses the reaction fluoride(in) = fluoride(out). Its activity is regulated as follows. Activated by membrane phosphatidylinositol 4,5-bisphosphate (PI(4,5)P2, PIP2). Inhibited by lumenal Ca(2+). Its function is as follows. Anion-selective channel with Ca(2+)-dependent and voltage-independent gating. Permeable to small monovalent anions with selectivity for bromide &gt; chloride &gt; nitrate &gt; fluoride. Operates in the endoplasmic reticulum (ER) membrane where it mediates chloride efflux to compensate for the loss of positive charges from the ER lumen upon Ca(2+) release. Contributes to the maintenance of ER Ca(2+) pools and activation of unfolded protein response to prevent accumulation of misfolded proteins in the ER lumen. Particularly involved in ER homeostasis mechanisms underlying motor neurons and retinal photoreceptors survival. In Mus musculus (Mouse), this protein is Chloride channel CLIC-like protein 1.